A 221-amino-acid chain; its full sequence is Extracellular superoxide dismutase [Cu-Zn] (221 aa).

Positions 1–19 are cleaved as a signal peptide; sequence MKTRVVLILALSVCIEAAS. Asn56 carries N-linked (GlcNAc...) asparagine glycosylation. Cu cation contacts are provided by His70, His72, and His87. A disulfide bond links Cys81 and Cys170. Zn(2+) contacts are provided by His87, His95, His104, and Asp107. Cu cation is bound at residue His144.

The protein belongs to the Cu-Zn superoxide dismutase family. Requires Cu cation as cofactor. Zn(2+) is required as a cofactor. As to expression, isoform 2 is preferentially expressed in eggs.

The protein resides in the secreted. It is found in the extracellular space. Its subcellular location is the membrane. It carries out the reaction 2 superoxide + 2 H(+) = H2O2 + O2. Its function is as follows. Protects cells against oxidative stress by converting superoxide radicals to hydrogen peroxide. Oxidative stress is involved in various biological dysfunctions and senescence. The sequence is that of Extracellular superoxide dismutase [Cu-Zn] (sod-4) from Caenorhabditis elegans.